Here is a 341-residue protein sequence, read N- to C-terminus: Hydrogenase expression/formation protein HupE (341 aa).

The protein belongs to the HypE family.

Functionally, may be involved in the maturation of the NifE hydrogenase. The chain is Hydrogenase expression/formation protein HupE (hupE) from Azotobacter chroococcum mcd 1.